The chain runs to 214 residues: Large ribosomal subunit protein uL3 (214 aa).

Q153 is modified (N5-methylglutamine).

It belongs to the universal ribosomal protein uL3 family. In terms of assembly, part of the 50S ribosomal subunit. Forms a cluster with proteins L14 and L19. Methylated by PrmB.

Its function is as follows. One of the primary rRNA binding proteins, it binds directly near the 3'-end of the 23S rRNA, where it nucleates assembly of the 50S subunit. This is Large ribosomal subunit protein uL3 from Methylobacillus flagellatus (strain ATCC 51484 / DSM 6875 / VKM B-1610 / KT).